The sequence spans 515 residues: GMP synthase [glutamine-hydrolyzing] (515 aa).

A Glutamine amidotransferase type-1 domain is found at 6 to 198 (KVIIIDYGSQ…LFHVAKLKAD (193 aa)). The active-site Nucleophile is cysteine 83. Residues histidine 172 and glutamate 174 contribute to the active site. Residues 199-390 (WTMSSFVERA…LGLPDFIIWR (192 aa)) form the GMPS ATP-PPase domain. Position 226-232 (226-232 (SGGIDST)) interacts with ATP.

Homodimer.

It carries out the reaction XMP + L-glutamine + ATP + H2O = GMP + L-glutamate + AMP + diphosphate + 2 H(+). It participates in purine metabolism; GMP biosynthesis; GMP from XMP (L-Gln route): step 1/1. Functionally, catalyzes the synthesis of GMP from XMP. In Nitratidesulfovibrio vulgaris (strain DP4) (Desulfovibrio vulgaris), this protein is GMP synthase [glutamine-hydrolyzing].